We begin with the raw amino-acid sequence, 319 residues long: Quinolinate synthase (319 aa).

Iminosuccinate contacts are provided by histidine 35 and serine 52. Cysteine 97 contributes to the [4Fe-4S] cluster binding site. Residues 123-125 (YIN) and serine 140 each bind iminosuccinate. Position 183 (cysteine 183) interacts with [4Fe-4S] cluster. Iminosuccinate is bound by residues 209–211 (HPE) and threonine 226. Residue cysteine 276 participates in [4Fe-4S] cluster binding.

Belongs to the quinolinate synthase family. Type 2 subfamily. [4Fe-4S] cluster serves as cofactor.

It localises to the cytoplasm. The catalysed reaction is iminosuccinate + dihydroxyacetone phosphate = quinolinate + phosphate + 2 H2O + H(+). Its pathway is cofactor biosynthesis; NAD(+) biosynthesis; quinolinate from iminoaspartate: step 1/1. Functionally, catalyzes the condensation of iminoaspartate with dihydroxyacetone phosphate to form quinolinate. This is Quinolinate synthase from Microcystis aeruginosa (strain NIES-843 / IAM M-2473).